The following is a 118-amino-acid chain: Urease subunit beta (118 aa).

It belongs to the urease beta subunit family. Heterotrimer of UreA (gamma), UreB (beta) and UreC (alpha) subunits. Three heterotrimers associate to form the active enzyme.

Its subcellular location is the cytoplasm. The enzyme catalyses urea + 2 H2O + H(+) = hydrogencarbonate + 2 NH4(+). It functions in the pathway nitrogen metabolism; urea degradation; CO(2) and NH(3) from urea (urease route): step 1/1. The sequence is that of Urease subunit beta from Aliivibrio fischeri (strain ATCC 700601 / ES114) (Vibrio fischeri).